A 215-amino-acid polypeptide reads, in one-letter code: Hibernation-associated plasma protein HP-27 (215 aa).

The N-terminal stretch at 1–30 is a signal peptide; that stretch reads MYEAGKRASFMGGAGIWILALSVLMHVVCS. The interval 34-79 is disordered; it reads GNPESCNVPGPQGPPGMRGPPGTPGKPGPPGWNGFPGLPGPPGPPG. In terms of domain architecture, Collagen-like spans 43–81; that stretch reads GPQGPPGMRGPPGTPGKPGPPGWNGFPGLPGPPGPPGMT. Pro residues predominate over residues 44–63; the sequence is PQGPPGMRGPPGTPGKPGPP. The C1q domain occupies 85–215; the sequence is HSKGTSAFAV…VFSGFLIHEN (131 aa). An N-linked (GlcNAc...) asparagine glycan is attached at N155.

Plasma; synthesized in the liver.

Its subcellular location is the secreted. Plasma proteins HP-20, HP-25, HP-27 and HP-55 form a 140 kDa complex via disulfide bonds in the plasma and are hibernation specific. The sequence is that of Hibernation-associated plasma protein HP-27 from Tamias sibiricus (Siberian chipmunk).